Reading from the N-terminus, the 207-residue chain is MASVSPLAKYKLVFLGDQSVGKTSIITRFMYDKFDTTYQATIGIDFLSKTMYLEDRTVRLQLWDTAGQERFRSLIPSYIRDSSVAVVVYDVANRLSFLNTSKWIEEVRNERAGDVIIVLVGNKTDLVEKRQVSIEEGDSKGREYGVMFIETSAKAGFNIKPLFRKIAAALPGMESYSNTKNEDMVDVNLKPTSNSSQGDQQGGACSC.

16–23 (GDQSVGKT) lines the GTP pocket. Residues 38-46 (YQATIGIDF) carry the Effector region motif. Residues 64 to 68 (DTAGQ), 122 to 125 (NKTD), and 152 to 153 (SA) contribute to the GTP site. 2 S-geranylgeranyl cysteine lipidation sites follow: Cys205 and Cys207. Cysteine methyl ester is present on Cys207.

It belongs to the small GTPase superfamily. Rab family.

It localises to the golgi apparatus membrane. Protein transport. Regulator of membrane traffic from the Golgi apparatus towards the endoplasmic reticulum (ER). The polypeptide is Ras-related protein RABH1d (RABH1D) (Arabidopsis thaliana (Mouse-ear cress)).